The primary structure comprises 471 residues: uncharacterized protein (471 aa).

12 consecutive transmembrane segments (helical) span residues 48 to 68 (FISAALMLLNNTILCISFTIV), 85 to 105 (LSGVIIGLPTITALVLLYPML), 123 to 140 (YTMSCISCIIGHIMYALA), 145 to 165 (SVALILVSRIFTGVACTMFLY), 186 to 206 (VVNSVMATLGLTAGPFIGGLM), 223 to 243 (SGNWLMAFIWVGLFLFGFACF), 277 to 297 (FVGCLVIFVVAFSGFSAYFLL), 320 to 340 (GNFLSLAGIINVPLLLIFSYL), 349 to 369 (IILLGCCLNIVCMVIHITIHY), 379 to 399 (FIIYTLVFFGSSIANSPSVSL), 414 to 434 (VAVQISISLSDTVGAIFGGAF), and 440 to 460 (VVFFAVCLILNVMSVLALLII).

This sequence belongs to the major facilitator superfamily.

It is found in the golgi apparatus. The protein localises to the membrane. This is an uncharacterized protein from Schizosaccharomyces pombe (strain 972 / ATCC 24843) (Fission yeast).